The following is a 197-amino-acid chain: Nucleoside triphosphate pyrophosphatase (197 aa).

The Proton acceptor role is filled by aspartate 70.

Belongs to the Maf family. Requires a divalent metal cation as cofactor.

It is found in the cytoplasm. It catalyses the reaction a ribonucleoside 5'-triphosphate + H2O = a ribonucleoside 5'-phosphate + diphosphate + H(+). The enzyme catalyses a 2'-deoxyribonucleoside 5'-triphosphate + H2O = a 2'-deoxyribonucleoside 5'-phosphate + diphosphate + H(+). Nucleoside triphosphate pyrophosphatase. May have a dual role in cell division arrest and in preventing the incorporation of modified nucleotides into cellular nucleic acids. The chain is Nucleoside triphosphate pyrophosphatase (yhdE) from Shigella flexneri.